Consider the following 375-residue polypeptide: Queuine tRNA-ribosyltransferase (375 aa).

Asp-93 acts as the Proton acceptor in catalysis. Substrate is bound by residues 93–97, Asp-147, Gln-191, and Gly-218; that span reads DSGGF. The tract at residues 249–255 is RNA binding; sequence GVGTPLD. Asp-268 functions as the Nucleophile in the catalytic mechanism. Residues 273-277 form an RNA binding; important for wobble base 34 recognition region; it reads TRNAR. Residues Cys-306, Cys-308, Cys-311, and His-337 each coordinate Zn(2+).

It belongs to the queuine tRNA-ribosyltransferase family. In terms of assembly, homodimer. Within each dimer, one monomer is responsible for RNA recognition and catalysis, while the other monomer binds to the replacement base PreQ1. Zn(2+) is required as a cofactor.

It carries out the reaction 7-aminomethyl-7-carbaguanine + guanosine(34) in tRNA = 7-aminomethyl-7-carbaguanosine(34) in tRNA + guanine. Its pathway is tRNA modification; tRNA-queuosine biosynthesis. In terms of biological role, catalyzes the base-exchange of a guanine (G) residue with the queuine precursor 7-aminomethyl-7-deazaguanine (PreQ1) at position 34 (anticodon wobble position) in tRNAs with GU(N) anticodons (tRNA-Asp, -Asn, -His and -Tyr). Catalysis occurs through a double-displacement mechanism. The nucleophile active site attacks the C1' of nucleotide 34 to detach the guanine base from the RNA, forming a covalent enzyme-RNA intermediate. The proton acceptor active site deprotonates the incoming PreQ1, allowing a nucleophilic attack on the C1' of the ribose to form the product. After dissociation, two additional enzymatic reactions on the tRNA convert PreQ1 to queuine (Q), resulting in the hypermodified nucleoside queuosine (7-(((4,5-cis-dihydroxy-2-cyclopenten-1-yl)amino)methyl)-7-deazaguanosine). This is Queuine tRNA-ribosyltransferase from Nitratidesulfovibrio vulgaris (strain DP4) (Desulfovibrio vulgaris).